The chain runs to 100 residues: Integration host factor subunit alpha (100 aa).

It belongs to the bacterial histone-like protein family. In terms of assembly, heterodimer of an alpha and a beta chain.

Functionally, this protein is one of the two subunits of integration host factor, a specific DNA-binding protein that functions in genetic recombination as well as in transcriptional and translational control. The protein is Integration host factor subunit alpha of Rhizorhabdus wittichii (strain DSM 6014 / CCUG 31198 / JCM 15750 / NBRC 105917 / EY 4224 / RW1) (Sphingomonas wittichii).